Reading from the N-terminus, the 305-residue chain is Glycine--tRNA ligase alpha subunit (305 aa).

It belongs to the class-II aminoacyl-tRNA synthetase family. In terms of assembly, tetramer of two alpha and two beta subunits.

It is found in the cytoplasm. It carries out the reaction tRNA(Gly) + glycine + ATP = glycyl-tRNA(Gly) + AMP + diphosphate. The protein is Glycine--tRNA ligase alpha subunit of Streptococcus thermophilus (strain CNRZ 1066).